A 448-amino-acid chain; its full sequence is Exodeoxyribonuclease 7 large subunit (448 aa).

Belongs to the XseA family. In terms of assembly, heterooligomer composed of large and small subunits.

It is found in the cytoplasm. It catalyses the reaction Exonucleolytic cleavage in either 5'- to 3'- or 3'- to 5'-direction to yield nucleoside 5'-phosphates.. Functionally, bidirectionally degrades single-stranded DNA into large acid-insoluble oligonucleotides, which are then degraded further into small acid-soluble oligonucleotides. The chain is Exodeoxyribonuclease 7 large subunit from Enterococcus faecalis (strain ATCC 700802 / V583).